The following is a 580-amino-acid chain: Arginine--tRNA ligase (580 aa).

Residues 127 to 137 (PNLAKEMHVGH) carry the 'HIGH' region motif.

This sequence belongs to the class-I aminoacyl-tRNA synthetase family. In terms of assembly, monomer.

The protein resides in the cytoplasm. It carries out the reaction tRNA(Arg) + L-arginine + ATP = L-arginyl-tRNA(Arg) + AMP + diphosphate. In Idiomarina loihiensis (strain ATCC BAA-735 / DSM 15497 / L2-TR), this protein is Arginine--tRNA ligase.